A 219-amino-acid polypeptide reads, in one-letter code: Small ribosomal subunit protein uS3c (219 aa).

In terms of domain architecture, KH type-2 spans 39-118 (IRSFIRKYIQ…RLNIVITKVE (80 aa)).

Belongs to the universal ribosomal protein uS3 family. As to quaternary structure, part of the 30S ribosomal subunit.

It is found in the plastid. The polypeptide is Small ribosomal subunit protein uS3c (rps3) (Cuscuta obtusiflora (Peruvian dodder)).